The primary structure comprises 287 residues: Bifunctional protein FolD (287 aa).

NADP(+)-binding positions include 160 to 162, Ser-189, and Thr-230; that span reads GRS.

Belongs to the tetrahydrofolate dehydrogenase/cyclohydrolase family. As to quaternary structure, homodimer.

The enzyme catalyses (6R)-5,10-methylene-5,6,7,8-tetrahydrofolate + NADP(+) = (6R)-5,10-methenyltetrahydrofolate + NADPH. It catalyses the reaction (6R)-5,10-methenyltetrahydrofolate + H2O = (6R)-10-formyltetrahydrofolate + H(+). It functions in the pathway one-carbon metabolism; tetrahydrofolate interconversion. Its function is as follows. Catalyzes the oxidation of 5,10-methylenetetrahydrofolate to 5,10-methenyltetrahydrofolate and then the hydrolysis of 5,10-methenyltetrahydrofolate to 10-formyltetrahydrofolate. The polypeptide is Bifunctional protein FolD (Chlamydia muridarum (strain MoPn / Nigg)).